The primary structure comprises 455 residues: tRNA modification GTPase MnmE (455 aa).

Positions 25, 85, and 124 each coordinate (6S)-5-formyl-5,6,7,8-tetrahydrofolate. The 155-residue stretch at 221–375 (GLSTAIIGRP…IEERINKLFF (155 aa)) folds into the TrmE-type G domain. A K(+)-binding site is contributed by asparagine 231. Residues 231 to 236 (NVGKSS), 250 to 256 (TDIEGTT), and 275 to 278 (DTAG) each bind GTP. A Mg(2+)-binding site is contributed by serine 235. Positions 250, 252, and 255 each coordinate K(+). Position 256 (threonine 256) interacts with Mg(2+). Lysine 455 contacts (6S)-5-formyl-5,6,7,8-tetrahydrofolate.

The protein belongs to the TRAFAC class TrmE-Era-EngA-EngB-Septin-like GTPase superfamily. TrmE GTPase family. As to quaternary structure, homodimer. Heterotetramer of two MnmE and two MnmG subunits. K(+) is required as a cofactor.

The protein localises to the cytoplasm. Its function is as follows. Exhibits a very high intrinsic GTPase hydrolysis rate. Involved in the addition of a carboxymethylaminomethyl (cmnm) group at the wobble position (U34) of certain tRNAs, forming tRNA-cmnm(5)s(2)U34. The polypeptide is tRNA modification GTPase MnmE (Streptococcus mutans serotype c (strain ATCC 700610 / UA159)).